Here is a 240-residue protein sequence, read N- to C-terminus: Eukaryotic translation initiation factor 3 subunit K (240 aa).

The PCI domain occupies 41 to 221 (YDKDIVLTIL…TIKTRNIDEK (181 aa)).

The protein belongs to the eIF-3 subunit K family. As to quaternary structure, component of the eukaryotic translation initiation factor 3 (eIF-3) complex.

Its subcellular location is the cytoplasm. Component of the eukaryotic translation initiation factor 3 (eIF-3) complex, which is involved in protein synthesis of a specialized repertoire of mRNAs and, together with other initiation factors, stimulates binding of mRNA and methionyl-tRNAi to the 40S ribosome. The eIF-3 complex specifically targets and initiates translation of a subset of mRNAs involved in cell proliferation. This is Eukaryotic translation initiation factor 3 subunit K from Caenorhabditis elegans.